Reading from the N-terminus, the 494-residue chain is DEAD-box ATP-dependent RNA helicase CshA (494 aa).

A Q motif motif is present at residues 3 to 31 (ITFQDFNLSSDLMKAINRMGFEEATPIQA). Residues 34-204 (IPLGLSNKDV…ERFMTEPEHV (171 aa)) enclose the Helicase ATP-binding domain. 47 to 54 (AQTGTGKT) provides a ligand contact to ATP. Positions 152-155 (DEAD) match the DEAD box motif. Residues 215-375 (NIQQFYLEVQ…RMKEPTLDEA (161 aa)) form the Helicase C-terminal domain. A required for dimerization or oligomerization region spans residues 413-494 (VTVVAAAIKM…SGDRRQKKSY (82 aa)). A disordered region spans residues 429–494 (DTPVRLTDEA…SGDRRQKKSY (66 aa)). Residues 443–452 (KRYKNQRSSK) show a composition bias toward basic residues. Residues 473–488 (SYDKKRSNDRRSSGDR) are compositionally biased toward basic and acidic residues.

The protein belongs to the DEAD box helicase family. CshA subfamily. In terms of assembly, homodimer or oligomer. May interact with RNA helicases CshB and DbpA (DeaD). Probably a component of the RNA degradosome complex composed of rny, rnjA, rnjB, pnp, pfkA and eno, and possibly also rnpA (although rnjA and rnjB's presence is unclear). Interacts with ribosomal proteins L1 and L3 (rplA and rplC) and the protein component of RNase RnpA. Interacts with the RNA polymerase core. The cofactor is Mg(2+).

The protein resides in the cytoplasm. The protein localises to the nucleoid. Its subcellular location is the cell membrane. It carries out the reaction ATP + H2O = ADP + phosphate + H(+). RNA helicase activity is inhibited by EDTA. The most abundant DEAD-box RNA helicase. An ATP-dependent RNA helicase with RNA-dependent ATPase activity. May work in conjunction with the cold shock proteins to ensure proper initiation of transcription at low and optimal temperatures. In vitro, unwinds dsRNA in both 5'- and 3'- directions. Plays a role in ribosomal 50S subunit assembly. Its deletion leads to changes in mRNA levels for over 200 transcripts. This chain is DEAD-box ATP-dependent RNA helicase CshA, found in Bacillus subtilis (strain 168).